The primary structure comprises 182 residues: Ribulose bisphosphate carboxylase small subunit, chloroplastic 3 (182 aa).

The transit peptide at 1-41 (MASIMMNKSVVLSKECAKPLASPKVTLNKRGFATTIATKNR) directs the protein to the chloroplast.

It belongs to the RuBisCO small chain family. As to quaternary structure, heterohexadecamer of 8 large and 8 small subunits.

Its subcellular location is the plastid. The protein localises to the chloroplast. In terms of biological role, ruBisCO catalyzes two reactions: the carboxylation of D-ribulose 1,5-bisphosphate, the primary event in carbon dioxide fixation, as well as the oxidative fragmentation of the pentose substrate. Both reactions occur simultaneously and in competition at the same active site. Although the small subunit is not catalytic it is essential for maximal activity. The chain is Ribulose bisphosphate carboxylase small subunit, chloroplastic 3 from Acetabularia acetabulum (Mermaid's wine glass).